Consider the following 701-residue polypeptide: Polyribonucleotide nucleotidyltransferase (701 aa).

Mg(2+) is bound by residues aspartate 487 and aspartate 493. Residues 554–613 (PTMIAMKIDTDKIRDVIGKGGATIRAICEETKASIDIEDDGSIKIFGETKEAADAAKQRI) enclose the KH domain. Residues 623–691 (GKIYVGKVER…NRGRIKLSIK (69 aa)) enclose the S1 motif domain.

This sequence belongs to the polyribonucleotide nucleotidyltransferase family. Component of the RNA degradosome, which is a multiprotein complex involved in RNA processing and mRNA degradation. Mg(2+) is required as a cofactor.

The protein localises to the cytoplasm. The catalysed reaction is RNA(n+1) + phosphate = RNA(n) + a ribonucleoside 5'-diphosphate. Its function is as follows. Involved in mRNA degradation. Catalyzes the phosphorolysis of single-stranded polyribonucleotides processively in the 3'- to 5'-direction. This Pseudomonas entomophila (strain L48) protein is Polyribonucleotide nucleotidyltransferase.